The chain runs to 267 residues: Interleukin-1 alpha (267 aa).

Positions 1-112 (MAKVPDLFED…DPEEGIIKPR (112 aa)) are excised as a propeptide. N-linked (GlcNAc...) asparagine glycosylation is present at Asn-64. An N6-acetyllysine modification is found at Lys-82. The segment at 82-86 (KKRRL) is nuclear localization signal (NLS). Ser-87 is modified (phosphoserine). Residues Asn-100 and Asn-141 are each glycosylated (N-linked (GlcNAc...) asparagine).

The protein belongs to the IL-1 family. As to quaternary structure, monomer. Interacts with TMED10; the interaction mediates the translocation from the cytoplasm into the ERGIC (endoplasmic reticulum-Golgi intermediate compartment) and thereby secretion. Interacts with IL1R1. Interacts with S100A13; this interaction is the first step in the export of IL1A, followed by direct translocation of this complex across the plasma membrane. In terms of processing, acetylated within its nuclear localization sequence, which impacts subcellular localization. Post-translationally, proteolytic processed by CAPN1 in a calcium-dependent manner. Cleavage from 31 kDa precursor to 18 kDa biologically active molecules. Phosphorylated. Phosphorylation greatly enhances susceptibility to digestion and promotes the conversion of pre-IL1A alpha to the biologically active IL1A.

It localises to the nucleus. The protein resides in the cytoplasm. Its subcellular location is the secreted. Cytokine constitutively present intracellularly in nearly all resting non-hematopoietic cells that plays an important role in inflammation and bridges the innate and adaptive immune systems. After binding to its receptor IL1R1 together with its accessory protein IL1RAP, forms the high affinity interleukin-1 receptor complex. Signaling involves the recruitment of adapter molecules such as MYD88, IRAK1 or IRAK4. In turn, mediates the activation of NF-kappa-B and the three MAPK pathways p38, p42/p44 and JNK pathways. Within the cell, acts as an alarmin and cell death results in its liberation in the extracellular space after disruption of the cell membrane to induce inflammation and alert the host to injury or damage. In addition to its role as a danger signal, which occurs when the cytokine is passively released by cell necrosis, directly senses DNA damage and acts as signal for genotoxic stress without loss of cell integrity. The protein is Interleukin-1 alpha (IL1A) of Oryctolagus cuniculus (Rabbit).